A 979-amino-acid chain; its full sequence is Pro-apoptotic serine protease NMA111 (979 aa).

Basic and acidic residues predominate over residues 1 to 20; that stretch reads MKRNGESHLNGEAKKSRTEQ. Residues 1–43 are disordered; that stretch reads MKRNGESHLNGEAKKSRTEQNQEQQDYQDEYYSSSDEELLPSS. Over residues 21 to 34 the composition is skewed to low complexity; it reads NQEQQDYQDEYYSS. Residues 65 to 260 form a serine protease region; that stretch reads KVVNSVVSIQ…LPVSRPKRAL (196 aa). Residues histidine 108, aspartate 139, and serine 222 each act as charge relay system in the active site. PDZ domains follow at residues 277–362 and 871–943; these read EWQL…FVFQ and PHYG…VSFD.

Belongs to the peptidase S1C family.

It localises to the nucleus. Functionally, nuclear serine protease which mediates apoptosis. The protein is Pro-apoptotic serine protease NMA111 (NMA111) of Lodderomyces elongisporus (strain ATCC 11503 / CBS 2605 / JCM 1781 / NBRC 1676 / NRRL YB-4239) (Yeast).